The following is a 303-amino-acid chain: Kynurenine formamidase (303 aa).

Residues 95-99 (HGGYW) carry the HGGXW motif. S164 serves as the catalytic Nucleophile. Catalysis depends on residues D247 and H279.

Belongs to the kynurenine formamidase family. As to quaternary structure, homodimer.

It localises to the cytoplasm. It is found in the cytosol. Its subcellular location is the nucleus. The enzyme catalyses N-formyl-L-kynurenine + H2O = L-kynurenine + formate + H(+). Its pathway is amino-acid degradation; L-tryptophan degradation via kynurenine pathway; L-kynurenine from L-tryptophan: step 2/2. In terms of biological role, catalyzes the hydrolysis of N-formyl-L-kynurenine to L-kynurenine, the second step in the kynurenine pathway of tryptophan degradation. Kynurenine may be further oxidized to nicotinic acid, NAD(H) and NADP(H). Required for elimination of toxic metabolites. This is Kynurenine formamidase from Homo sapiens (Human).